We begin with the raw amino-acid sequence, 666 residues long: Chaperone protein HtpG (666 aa).

The interval M1–R374 is a; substrate-binding. Residues E375 to Q593 form a b region. Residues M594–R666 form a c region.

Belongs to the heat shock protein 90 family. As to quaternary structure, homodimer.

It localises to the cytoplasm. Its function is as follows. Molecular chaperone. Has ATPase activity. The sequence is that of Chaperone protein HtpG from Psychrobacter cryohalolentis (strain ATCC BAA-1226 / DSM 17306 / VKM B-2378 / K5).